A 28-amino-acid polypeptide reads, in one-letter code: Endoglucanase (28 aa).

Catalysis depends on E20, which acts as the Nucleophile.

This sequence belongs to the glycosyl hydrolase 5 (cellulase A) family.

The protein resides in the cell membrane. The enzyme catalyses Endohydrolysis of (1-&gt;4)-beta-D-glucosidic linkages in cellulose, lichenin and cereal beta-D-glucans.. In Schizophyllum commune (Split gill fungus), this protein is Endoglucanase.